Here is a 215-residue protein sequence, read N- to C-terminus: Keratin-associated protein 26-1 (215 aa).

It belongs to the PMG family. Interacts with hair keratins.

In the hair cortex, hair keratin intermediate filaments are embedded in an interfilamentous matrix, consisting of hair keratin-associated proteins (KRTAP), which are essential for the formation of a rigid and resistant hair shaft through their extensive disulfide bond cross-linking with abundant cysteine residues of hair keratins. The matrix proteins include the high-sulfur and high-glycine-tyrosine keratins. This Mus musculus (Mouse) protein is Keratin-associated protein 26-1.